The sequence spans 459 residues: Cysteine--tRNA ligase (459 aa).

Cys-28 serves as a coordination point for Zn(2+). Residues 30-40 carry the 'HIGH' region motif; the sequence is ITIYDYCHIGH. Zn(2+) contacts are provided by Cys-209, His-234, and Glu-238. The 'KMSKS' region motif lies at 266 to 270; it reads KMSKS. Lys-269 serves as a coordination point for ATP.

The protein belongs to the class-I aminoacyl-tRNA synthetase family. Monomer. The cofactor is Zn(2+).

It is found in the cytoplasm. It carries out the reaction tRNA(Cys) + L-cysteine + ATP = L-cysteinyl-tRNA(Cys) + AMP + diphosphate. The sequence is that of Cysteine--tRNA ligase from Pseudoalteromonas translucida (strain TAC 125).